Reading from the N-terminus, the 115-residue chain is Probable mycobacterial cidal antitoxin Rv3188 (115 aa).

It belongs to the MbcA/ParS/Xre antitoxin family. As to quaternary structure, forms a heterotetramer with cognate toxin Rv3189.

In terms of biological role, probable antitoxin component of a type II toxin-antitoxin (TA) system. Neutralizes the activity of cognate toxin Rv3189 by blocking access to the toxin active site. The chain is Probable mycobacterial cidal antitoxin Rv3188 from Mycobacterium tuberculosis (strain ATCC 25618 / H37Rv).